We begin with the raw amino-acid sequence, 339 residues long: GTPase Obg (339 aa).

The region spanning 1-159 is the Obg domain; the sequence is MKFLDQAKVY…RALWLRLKLI (159 aa). One can recognise an OBG-type G domain in the interval 160–327; the sequence is ADGGIIGLPN…VLRSVAHVIE (168 aa). GTP is bound by residues 166-173, 191-195, 212-215, 279-282, and 308-310; these read GLPNAGKS, FTTLY, DIPG, SQVD, and SAV. Mg(2+) contacts are provided by serine 173 and threonine 193.

It belongs to the TRAFAC class OBG-HflX-like GTPase superfamily. OBG GTPase family. In terms of assembly, monomer. Mg(2+) is required as a cofactor.

The protein resides in the cytoplasm. An essential GTPase which binds GTP, GDP and possibly (p)ppGpp with moderate affinity, with high nucleotide exchange rates and a fairly low GTP hydrolysis rate. Plays a role in control of the cell cycle, stress response, ribosome biogenesis and in those bacteria that undergo differentiation, in morphogenesis control. The protein is GTPase Obg of Bartonella bacilliformis (strain ATCC 35685 / KC583 / Herrer 020/F12,63).